Here is a 363-residue protein sequence, read N- to C-terminus: Fructose-bisphosphate aldolase C (363 aa).

Y5 bears the Phosphotyrosine mark. A phosphoserine mark is found at S36, S39, and S45. Residue R56 participates in substrate binding. Position 111 is an N6-acetyllysine (K111). K147 is a substrate binding site. E188 serves as the catalytic Proton acceptor. K230 serves as the catalytic Schiff-base intermediate with dihydroxyacetone-P.

The protein belongs to the class I fructose-bisphosphate aldolase family. Homotetramer. Interacts with ATP6V1E1. As to expression, expressed exclusively in Purkinje cells in bands running from anterior to posterior across most of the cerebellum. Expressed at higher levels in the brains of BSE-infected animals.

The catalysed reaction is beta-D-fructose 1,6-bisphosphate = D-glyceraldehyde 3-phosphate + dihydroxyacetone phosphate. It participates in carbohydrate degradation; glycolysis; D-glyceraldehyde 3-phosphate and glycerone phosphate from D-glucose: step 4/4. In Mus musculus (Mouse), this protein is Fructose-bisphosphate aldolase C (Aldoc).